Reading from the N-terminus, the 246-residue chain is Anionic trypsin-2 (246 aa).

The N-terminal stretch at 1–15 is a signal peptide; the sequence is MSALLILALVGAAVA. Residues 16-23 constitute a propeptide, activation peptide; sequence FPVDDDDK. The region spanning 24–244 is the Peptidase S1 domain; it reads IVGGYTCRES…YVDWIQNTIA (221 aa). Cystine bridges form between cysteine 30–cysteine 160, cysteine 48–cysteine 64, cysteine 132–cysteine 233, cysteine 139–cysteine 206, cysteine 171–cysteine 185, and cysteine 196–cysteine 220. Residue histidine 63 is the Charge relay system of the active site. The Ca(2+) site is built by glutamate 75, asparagine 77, valine 80, and glutamate 85. Aspartate 107 (charge relay system) is an active-site residue. Catalysis depends on serine 200, which acts as the Charge relay system.

It belongs to the peptidase S1 family. Ca(2+) is required as a cofactor. Expressed in the pancreas, lung and kidney.

It localises to the secreted. Its subcellular location is the extracellular space. The catalysed reaction is Preferential cleavage: Arg-|-Xaa, Lys-|-Xaa.. This chain is Anionic trypsin-2 (Prss2), found in Mus musculus (Mouse).